A 401-amino-acid chain; its full sequence is Exodeoxyribonuclease 7 large subunit (401 aa).

Belongs to the XseA family. Heterooligomer composed of large and small subunits.

The protein resides in the cytoplasm. It carries out the reaction Exonucleolytic cleavage in either 5'- to 3'- or 3'- to 5'-direction to yield nucleoside 5'-phosphates.. Bidirectionally degrades single-stranded DNA into large acid-insoluble oligonucleotides, which are then degraded further into small acid-soluble oligonucleotides. This is Exodeoxyribonuclease 7 large subunit from Lachnoclostridium phytofermentans (strain ATCC 700394 / DSM 18823 / ISDg) (Clostridium phytofermentans).